We begin with the raw amino-acid sequence, 118 residues long: Ribonuclease P protein component (118 aa).

Belongs to the RnpA family. As to quaternary structure, consists of a catalytic RNA component (M1 or rnpB) and a protein subunit.

It catalyses the reaction Endonucleolytic cleavage of RNA, removing 5'-extranucleotides from tRNA precursor.. In terms of biological role, RNaseP catalyzes the removal of the 5'-leader sequence from pre-tRNA to produce the mature 5'-terminus. It can also cleave other RNA substrates such as 4.5S RNA. The protein component plays an auxiliary but essential role in vivo by binding to the 5'-leader sequence and broadening the substrate specificity of the ribozyme. The protein is Ribonuclease P protein component of Bifidobacterium animalis subsp. lactis (strain AD011).